The following is a 288-amino-acid chain: Leucine-rich repeat-containing protein 72 (288 aa).

4 LRR repeats span residues Asp-47–Lys-68, Lys-69–Tyr-90, Cys-91–Pro-112, and Ser-113–Leu-134. The LRRCT domain maps to Asn-148 to Leu-186.

This Bos taurus (Bovine) protein is Leucine-rich repeat-containing protein 72 (LRRC72).